The chain runs to 204 residues: Imidazoleglycerol-phosphate dehydratase (204 aa).

Belongs to the imidazoleglycerol-phosphate dehydratase family.

The protein resides in the cytoplasm. The catalysed reaction is D-erythro-1-(imidazol-4-yl)glycerol 3-phosphate = 3-(imidazol-4-yl)-2-oxopropyl phosphate + H2O. It functions in the pathway amino-acid biosynthesis; L-histidine biosynthesis; L-histidine from 5-phospho-alpha-D-ribose 1-diphosphate: step 6/9. The protein is Imidazoleglycerol-phosphate dehydratase of Rhodococcus opacus (strain B4).